A 95-amino-acid chain; its full sequence is MSVDLATVKRVAHLARIAVNEDEAQRMVGELNGMLGFVEQLSEVNVDGVEAMTSVTPMAMKKRTDEVTDGSKAADIVANAPNTDQNFFLVPKVVE.

Belongs to the GatC family. Heterotrimer of A, B and C subunits.

It catalyses the reaction L-glutamyl-tRNA(Gln) + L-glutamine + ATP + H2O = L-glutaminyl-tRNA(Gln) + L-glutamate + ADP + phosphate + H(+). It carries out the reaction L-aspartyl-tRNA(Asn) + L-glutamine + ATP + H2O = L-asparaginyl-tRNA(Asn) + L-glutamate + ADP + phosphate + 2 H(+). Allows the formation of correctly charged Asn-tRNA(Asn) or Gln-tRNA(Gln) through the transamidation of misacylated Asp-tRNA(Asn) or Glu-tRNA(Gln) in organisms which lack either or both of asparaginyl-tRNA or glutaminyl-tRNA synthetases. The reaction takes place in the presence of glutamine and ATP through an activated phospho-Asp-tRNA(Asn) or phospho-Glu-tRNA(Gln). In Rhizobium rhizogenes (strain K84 / ATCC BAA-868) (Agrobacterium radiobacter), this protein is Aspartyl/glutamyl-tRNA(Asn/Gln) amidotransferase subunit C.